We begin with the raw amino-acid sequence, 404 residues long: Acetylornithine/succinyldiaminopimelate aminotransferase (404 aa).

Residues 108-109 and Phe141 each bind pyridoxal 5'-phosphate; that span reads GA. Residue Arg144 participates in N(2)-acetyl-L-ornithine binding. 226-229 lines the pyridoxal 5'-phosphate pocket; the sequence is DEIQ. Residue Lys255 is modified to N6-(pyridoxal phosphate)lysine. Thr283 serves as a coordination point for N(2)-acetyl-L-ornithine. Thr284 is a binding site for pyridoxal 5'-phosphate.

Belongs to the class-III pyridoxal-phosphate-dependent aminotransferase family. ArgD subfamily. In terms of assembly, homodimer. The cofactor is pyridoxal 5'-phosphate.

It localises to the cytoplasm. It catalyses the reaction N(2)-acetyl-L-ornithine + 2-oxoglutarate = N-acetyl-L-glutamate 5-semialdehyde + L-glutamate. The catalysed reaction is N-succinyl-(2S,6S)-2,6-diaminopimelate + 2-oxoglutarate = (S)-2-succinylamino-6-oxoheptanedioate + L-glutamate. It functions in the pathway amino-acid biosynthesis; L-arginine biosynthesis; N(2)-acetyl-L-ornithine from L-glutamate: step 4/4. The protein operates within amino-acid biosynthesis; L-lysine biosynthesis via DAP pathway; LL-2,6-diaminopimelate from (S)-tetrahydrodipicolinate (succinylase route): step 2/3. In terms of biological role, involved in both the arginine and lysine biosynthetic pathways. In Buchnera aphidicola subsp. Schizaphis graminum (strain Sg), this protein is Acetylornithine/succinyldiaminopimelate aminotransferase.